The primary structure comprises 479 residues: Endo-beta-1,6-galactanase (479 aa).

A signal peptide spans 1–20; sequence MRSIVLPSLALALFSQRARA. Asn89 carries N-linked (GlcNAc...) asparagine glycosylation. Catalysis depends on Glu210, which acts as the Proton donor. A glycan (N-linked (GlcNAc...) asparagine) is linked at Asn271. Glu311 serves as the catalytic Nucleophile. Residue Asn358 is glycosylated (N-linked (GlcNAc...) asparagine).

It carries out the reaction Endohydrolysis of (1-&gt;6)-beta-D-galactosidic linkages in arabinogalactan proteins and (1-&gt;3):(1-&gt;6)-beta-galactans to yield galactose and beta-(1-&gt;6)-galactaobiose as the final products.. Its function is as follows. Hydrolyzes galactooligomers with a degree of polymerization higher than 3. Hydrolyzes radish root arabinogalactan-protein. Does not hydrolyze dextran, arabinan, starch, laminarin, beta-1,4- and beta-1,3-galactans, larch wood arabinogalactan or acid-insoluble polygalacturonic acid. In Hypocrea rufa (Trichoderma viride), this protein is Endo-beta-1,6-galactanase.